We begin with the raw amino-acid sequence, 137 residues long: Small ribosomal subunit protein uS9 (137 aa).

The segment covering 105–117 (LKIEGHLSRDPRA) has biased composition (basic and acidic residues). Positions 105 to 137 (LKIEGHLSRDPRAKERRKYGLKKARKAPQFSKR) are disordered. Residues 118–137 (KERRKYGLKKARKAPQFSKR) are compositionally biased toward basic residues.

Belongs to the universal ribosomal protein uS9 family.

This is Small ribosomal subunit protein uS9 from Prochlorococcus marinus (strain MIT 9211).